Here is a 309-residue protein sequence, read N- to C-terminus: Porphobilinogen deaminase (309 aa).

Position 242 is an S-(dipyrrolylmethanemethyl)cysteine (cysteine 242).

The protein belongs to the HMBS family. In terms of assembly, monomer. Dipyrromethane serves as cofactor.

It catalyses the reaction 4 porphobilinogen + H2O = hydroxymethylbilane + 4 NH4(+). It participates in porphyrin-containing compound metabolism; protoporphyrin-IX biosynthesis; coproporphyrinogen-III from 5-aminolevulinate: step 2/4. In terms of biological role, tetrapolymerization of the monopyrrole PBG into the hydroxymethylbilane pre-uroporphyrinogen in several discrete steps. In Actinobacillus succinogenes (strain ATCC 55618 / DSM 22257 / CCUG 43843 / 130Z), this protein is Porphobilinogen deaminase.